A 247-amino-acid chain; its full sequence is uncharacterized protein (247 aa).

The N-terminal stretch at 1-35 (MWGPGVTAEGLSVAPAPPPLLPLLLLLALALVAPS) is a signal peptide. A glycan (N-linked (GlcNAc...) asparagine) is linked at N57. Residues 82–102 (LSGLLILLVLFAIGYFLQRII) traverse the membrane as a helical segment. Residues 109 to 179 (YPRGQARPGQ…GGRSDPSCAS (71 aa)) are disordered. The span at 160–172 (SGGGGRGRGGGGR) shows a compositional bias: gly residues.

It is found in the membrane. This is an uncharacterized protein from Homo sapiens (Human).